We begin with the raw amino-acid sequence, 261 residues long: MHQDTVRATAFAMPLTSPAYPVGPYRFRNREYLIITYRTDPKKLRSLVPEPLELSEPLVKFEFIRMPDSTGFGNYTESGQVIPVTFRGRKGSYTHCMFLNDHPPIAGGRELWGFPKKLATPTLRTETDTLVGTLDYGPVRVATATMGYKHEAADLSAVRSSLAEPNFLLKIIPHVDGTPRICELVEYHLEDVDLRGAWAGPASLNLWSHALAPVAELPVLEVVSAMHIVADLTLALGKVVHDYLPKSEPRDLKGRSHAFAE.

The Schiff-base intermediate with acetoacetate role is filled by Lys-116.

It belongs to the ADC family.

It catalyses the reaction acetoacetate + H(+) = acetone + CO2. In terms of biological role, catalyzes the conversion of acetoacetate to acetone and carbon dioxide. This chain is Acetoacetate decarboxylase 2, found in Mesorhizobium japonicum (strain LMG 29417 / CECT 9101 / MAFF 303099) (Mesorhizobium loti (strain MAFF 303099)).